The chain runs to 501 residues: NAD(P)H-quinone oxidoreductase chain 4, chloroplastic (501 aa).

A run of 14 helical transmembrane segments spans residues 4-24, 35-55, 87-107, 113-133, 134-154, 167-187, 211-231, 242-262, 274-294, 310-330, 331-351, 386-406, 416-436, and 464-484; these read FPWLTTIVLLPVFAGCVIPFF, YTLGVCLLEFLLITYVFCYYF, IGLILLTGFITTLATLAAWPV, LFYFLMLAMYSGQVGLFASQD, ILLFFFMWELELIPVYLLLCI, FILYTAGGSIFILMGALTMGF, IILYLGFFIAYAVKLPIFPLH, HYSTCMLLAGILLKMGGYGLI, SIFAPWIVAVGAIQIVYAALI, ISHMGFVLIGIGSMTDVGLNG, AILQMVSHGLIGAALFFLAGI, LALPGMSGFVAEFLVFLGIVV, ILVTIIEAIGIILTPIYLLSM, and IFILVCLIFPIVGIGLYPNSV.

It belongs to the complex I subunit 4 family.

The protein resides in the plastid. It localises to the chloroplast thylakoid membrane. The enzyme catalyses a plastoquinone + NADH + (n+1) H(+)(in) = a plastoquinol + NAD(+) + n H(+)(out). The catalysed reaction is a plastoquinone + NADPH + (n+1) H(+)(in) = a plastoquinol + NADP(+) + n H(+)(out). The polypeptide is NAD(P)H-quinone oxidoreductase chain 4, chloroplastic (Physcomitrium patens (Spreading-leaved earth moss)).